Here is a 471-residue protein sequence, read N- to C-terminus: Tryptophanase (471 aa).

N6-(pyridoxal phosphate)lysine is present on lysine 270.

Belongs to the beta-eliminating lyase family. In terms of assembly, homotetramer. The cofactor is pyridoxal 5'-phosphate.

The enzyme catalyses L-tryptophan + H2O = indole + pyruvate + NH4(+). Its pathway is amino-acid degradation; L-tryptophan degradation via pyruvate pathway; indole and pyruvate from L-tryptophan: step 1/1. This is Tryptophanase from Histophilus somni (strain 129Pt) (Haemophilus somnus).